A 784-amino-acid chain; its full sequence is MPRALWTAWVWAXIILSTEGASDQASSLSCDSTGVCDGHSRSLNSIPSGLTAGVKSLDLSNNEITYVGNRDLQRCVNLKTLRLGANEIHTVEEDSFFHLRNLEYLDLSYNRLSNLSSSWFRSLYVLKFLNLLGNLYKTLGETSLFSHLPNLXTLKVGNSNSFTEIHEKDFTGLTFLEELEISAQNLQIYVPKSLKSIQNISHLILHLKQPVLLVDILVDIVSSLDCLELRDTNLHTFHFSEASISEMSTSVKKLIFRNVQFTDESFVEVVKLFNYVSGILEVEFDDCTHDGIGDFRALSLDRIRHLGNVETLTIRKLHIPQFFLFHDLSSIYPLTGKVKRVTIENSKVFLVPCLLSQHLKSLEYLDLSENLMSEETLKNSACKDAWPFLQTLVLRQNRLKSLEKTGELLLTLENLNSLDISKNNFLSMPETCQWPGKMKQLNLSSTRIHSLTQCLPQTLEILDVSNNNLDSFSLILPQLKELYISRNKLKTLPDASFLPVLSVMRISRNIINTFSKEQLDSFQQLKTLEAGGNNFICSCDFLSFTQGQQALGRVLVDWPDDYRCDSPSHVRGQRVQDARLSLSECHRAAVVSAACCALFLVLLLTGVLCHRFHGLWYMKMMWAWLQAKRKPRKAPRRDICYDAFVSYSERDSYWVENLMVQELEQFNPPFKLCLHKRDFIPGKWIIDNIIDSIEKSHKTIFVLSENFVXSEWCKYELDFSHFRLFDENNDAAILILLEPIDKKAIPQRFCKLRKIMNTKTYLEWPVDETQQEGFWLNLRAAIRS.

The signal sequence occupies residues 1–20 (MPRALWTAWVWAXIILSTEG). Residues 21–587 (ASDQASSLSC…ARLSLSECHR (567 aa)) lie on the Extracellular side of the membrane. Cys30 and Cys36 form a disulfide bridge. LRR repeat units follow at residues 54–77 (VKSL…RCVN), 78–101 (LKTL…HLRN), 102–125 (LEYL…SLYV), 126–150 (LKFL…HLPN), 151–175 (LXTL…GLTF), 176–199 (LEEL…SIQN), 200–223 (ISHL…IVSS), 224–250 (LDCL…MSTS), 251–278 (VKKL…YVSG), 279–308 (ILEV…HLGN), 309–337 (VETL…LTGK), 338–361 (VKRV…HLKS), 362–388 (LEYL…AWPF), 389–414 (LQTL…TLEN), 415–437 (LNSL…WPGK), 438–457 (MKQL…CLPQ), 458–478 (TLEI…ILPQ), 479–500 (LKEL…FLPV), and 501–524 (LSVM…SFQQ). The N-linked (GlcNAc...) asparagine glycan is linked to Asn114. The N-linked (GlcNAc...) asparagine glycan is linked to Asn199. Cysteines 353 and 382 form a disulfide. Cys432 and Cys454 form a disulfide bridge. N-linked (GlcNAc...) asparagine glycosylation is present at Asn442. The LRRCT domain maps to 525–579 (LKTLEAGGNNFICSCDFLSFTQGQQALGRVLVDWPDDYRCDSPSHVRGQRVQDAR). The chain crosses the membrane as a helical span at residues 588 to 608 (AAVVSAACCALFLVLLLTGVL). Topologically, residues 609-784 (CHRFHGLWYM…WLNLRAAIRS (176 aa)) are cytoplasmic. One can recognise a TIR domain in the interval 639-782 (ICYDAFVSYS…GFWLNLRAAI (144 aa)). A Glycyl lysine isopeptide (Lys-Gly) (interchain with G-Cter in ubiquitin) cross-link involves residue Lys754. An ATG16L1-binding motif motif is present at residues 761–778 (YLEWPVDETQQEGFWLNL).

The protein belongs to the Toll-like receptor family. As to quaternary structure, interacts with LY96, TLR1 and TLR6 (via extracellular domain). TLR2 seems to exist in heterodimers with either TLR1 or TLR6 before stimulation by the ligand. The heterodimers form bigger oligomers in response to their corresponding ligands as well as further heterotypic associations with other receptors such as CD14 and/or CD36. Binds MYD88 (via TIR domain). Interacts with TICAM1. Interacts with CNPY3. Interacts with ATG16L1. Interacts with PPP1R11. Interacts with TICAM2. Interacts with TIRAP. Ubiquitinated at Lys-754 by PPP1R11, leading to its degradation. Deubiquitinated by USP2. Post-translationally, glycosylation of Asn-442 is critical for secretion of the N-terminal ectodomain of TLR2.

It localises to the membrane. Its subcellular location is the cytoplasmic vesicle. The protein resides in the phagosome membrane. The protein localises to the membrane raft. Functionally, cooperates with LY96 to mediate the innate immune response to bacterial lipoproteins and other microbial cell wall components. Cooperates with TLR1 or TLR6 to mediate the innate immune response to bacterial lipoproteins or lipopeptides. Acts via MYD88 and TRAF6, leading to NF-kappa-B activation, cytokine secretion and the inflammatory response. May also promote apoptosis in response to lipoproteins. Forms activation clusters composed of several receptors depending on the ligand, these clusters trigger signaling from the cell surface and subsequently are targeted to the Golgi in a lipid-raft dependent pathway. Forms the cluster TLR2:TLR6:CD14:CD36 in response to diacylated lipopeptides and TLR2:TLR1:CD14 in response to triacylated lipopeptides. The chain is Toll-like receptor 2 (TLR2) from Bison bison (American bison).